Consider the following 868-residue polypeptide: Envelope glycoprotein gp160 (868 aa).

An N-terminal signal peptide occupies residues 1–33 (MAMRAKGIRKNCQHLWRWGTMLLGMLMICSAAA). At 34–696 (NLWVTVYYGV…ITKWLWYIKI (663 aa)) the chain is on the extracellular side. Cys-55 and Cys-75 are joined by a disulfide. N-linked (GlcNAc...) asparagine; by host glycans are attached at residues Asn-89, Asn-131, Asn-138, Asn-139, Asn-142, Asn-162, Asn-166, Asn-195, Asn-198, Asn-208, Asn-245, Asn-252, Asn-273, Asn-287, Asn-300, Asn-306, Asn-312, Asn-342, Asn-349, Asn-365, and Asn-371. Intrachain disulfides connect Cys-120-Cys-216, Cys-127-Cys-207, Cys-132-Cys-163, Cys-229-Cys-258, and Cys-239-Cys-250. Residues 132–162 (CTDLNTNNTTNTTELSIIVVWEQRGKGEMRN) form a V1 region. Residues 163–207 (CSFNITTSIRDKVQREYALFYKLDVEPIDDNKNTTNNTKYRLINC) form a V2 region. The V3 stretch occupies residues 307–340 (CTRPNNHTRKRVTLGPGRVWYTTGEILGNIRQAH). The cysteines at positions 307 and 341 are disulfide-linked. The segment at 373–383 (SSGGDPEIVMH) is CD4-binding loop. Cystine bridges form between Cys-387/Cys-456 and Cys-394/Cys-429. The interval 394 to 429 (CNSTQLFNSAWNVTSNGTWSVTRKQKDTGDIITLPC) is V4. 5 N-linked (GlcNAc...) asparagine; by host glycosylation sites follow: Asn-395, Asn-405, Asn-409, Asn-459, and Asn-473. V5 stretches follow at residues 472–482 (ENQTTEIFRPG) and 474–482 (QTTEIFRPG). Residues 523–544 (AVGMLGAMFLGFLGAAGSTMGA) form a fusion peptide region. Residues 586 to 604 (KQLQARILAVERYLKDQQL) form an immunosuppression region. Cysteines 610 and 616 form a disulfide. 4 N-linked (GlcNAc...) asparagine; by host glycosylation sites follow: Asn-623, Asn-628, Asn-637, and Asn-649. Residues 645-679 (REIDNYTHLIYTLIEESQNQQEKNQQELLQLDKWA) are a coiled coil. An MPER; binding to GalCer region spans residues 674–695 (QLDKWASLWTWSDITKWLWYIK). Residues 697–717 (FIMIVGGLIGLRIVFAVLSIV) form a helical membrane-spanning segment. At 718-868 (NRVRQGYSPL…IRQGFERALL (151 aa)) the chain is on the cytoplasmic side. Residues 724–727 (YSPL) carry the YXXL motif; contains endocytosis signal motif. The tract at residues 731–755 (TLLPNPRGPDRPEGTEEGGGERGRD) is disordered. Over residues 738–755 (GPDRPEGTEEGGGERGRD) the composition is skewed to basic and acidic residues. The S-palmitoyl cysteine; by host moiety is linked to residue Cys-776. A Di-leucine internalization motif motif is present at residues 867-868 (LL).

This sequence belongs to the HIV-1 env protein family. As to quaternary structure, the mature envelope protein (Env) consists of a homotrimer of non-covalently associated gp120-gp41 heterodimers. The resulting complex protrudes from the virus surface as a spike. There seems to be as few as 10 spikes on the average virion. Interacts with host CD4, CCR5 and CXCR4. Gp120 also interacts with the C-type lectins CD209/DC-SIGN and CLEC4M/DC-SIGNR (collectively referred to as DC-SIGN(R)). Gp120 and gp41 interact with GalCer. Gp120 interacts with host ITGA4/ITGB7 complex; on CD4+ T-cells, this interaction results in rapid activation of integrin ITGAL/LFA-1, which facilitates efficient cell-to-cell spreading of HIV-1. Gp120 interacts with cell-associated heparan sulfate; this interaction increases virus infectivity on permissive cells and may be involved in infection of CD4- cells. In terms of assembly, the mature envelope protein (Env) consists of a homotrimer of non-covalently associated gp120-gp41 heterodimers. The resulting complex protrudes from the virus surface as a spike. There seems to be as few as 10 spikes on the average virion. Post-translationally, highly glycosylated by host. The high number of glycan on the protein is reffered to as 'glycan shield' because it contributes to hide protein sequence from adaptive immune system. Palmitoylation of the transmembrane protein and of Env polyprotein (prior to its proteolytic cleavage) is essential for their association with host cell membrane lipid rafts. Palmitoylation is therefore required for envelope trafficking to classical lipid rafts, but not for viral replication. In terms of processing, specific enzymatic cleavages in vivo yield mature proteins. Envelope glycoproteins are synthesized as an inactive precursor that is heavily N-glycosylated and processed likely by host cell furin in the Golgi to yield the mature SU and TM proteins. The cleavage site between SU and TM requires the minimal sequence [KR]-X-[KR]-R. About 2 of the 9 disulfide bonds of gp41 are reduced by P4HB/PDI, following binding to CD4 receptor.

Its subcellular location is the virion membrane. The protein resides in the host cell membrane. It is found in the host endosome membrane. Functionally, oligomerizes in the host endoplasmic reticulum into predominantly trimers. In a second time, gp160 transits in the host Golgi, where glycosylation is completed. The precursor is then proteolytically cleaved in the trans-Golgi and thereby activated by cellular furin or furin-like proteases to produce gp120 and gp41. Its function is as follows. Attaches the virus to the host lymphoid cell by binding to the primary receptor CD4. This interaction induces a structural rearrangement creating a high affinity binding site for a chemokine coreceptor like CXCR4 and/or CCR5. Acts as a ligand for CD209/DC-SIGN and CLEC4M/DC-SIGNR, which are respectively found on dendritic cells (DCs), and on endothelial cells of liver sinusoids and lymph node sinuses. These interactions allow capture of viral particles at mucosal surfaces by these cells and subsequent transmission to permissive cells. HIV subverts the migration properties of dendritic cells to gain access to CD4+ T-cells in lymph nodes. Virus transmission to permissive T-cells occurs either in trans (without DCs infection, through viral capture and transmission), or in cis (following DCs productive infection, through the usual CD4-gp120 interaction), thereby inducing a robust infection. In trans infection, bound virions remain infectious over days and it is proposed that they are not degraded, but protected in non-lysosomal acidic organelles within the DCs close to the cell membrane thus contributing to the viral infectious potential during DCs' migration from the periphery to the lymphoid tissues. On arrival at lymphoid tissues, intact virions recycle back to DCs' cell surface allowing virus transmission to CD4+ T-cells. In terms of biological role, acts as a class I viral fusion protein. Under the current model, the protein has at least 3 conformational states: pre-fusion native state, pre-hairpin intermediate state, and post-fusion hairpin state. During fusion of viral and target intracellular membranes, the coiled coil regions (heptad repeats) assume a trimer-of-hairpins structure, positioning the fusion peptide in close proximity to the C-terminal region of the ectodomain. The formation of this structure appears to drive apposition and subsequent fusion of viral and target cell membranes. Complete fusion occurs in host cell endosomes and is dynamin-dependent, however some lipid transfer might occur at the plasma membrane. The virus undergoes clathrin-dependent internalization long before endosomal fusion, thus minimizing the surface exposure of conserved viral epitopes during fusion and reducing the efficacy of inhibitors targeting these epitopes. Membranes fusion leads to delivery of the nucleocapsid into the cytoplasm. The chain is Envelope glycoprotein gp160 from Human immunodeficiency virus type 1 group M subtype B (isolate CDC-451) (HIV-1).